The chain runs to 132 residues: Small ribosomal subunit protein uS8 (132 aa).

It belongs to the universal ribosomal protein uS8 family. Part of the 30S ribosomal subunit. Contacts proteins S5 and S12.

Functionally, one of the primary rRNA binding proteins, it binds directly to 16S rRNA central domain where it helps coordinate assembly of the platform of the 30S subunit. The polypeptide is Small ribosomal subunit protein uS8 (Mycolicibacterium gilvum (strain PYR-GCK) (Mycobacterium gilvum (strain PYR-GCK))).